The sequence spans 352 residues: Phenylalanine--tRNA ligase alpha subunit (352 aa).

E258 contributes to the Mg(2+) binding site.

This sequence belongs to the class-II aminoacyl-tRNA synthetase family. Phe-tRNA synthetase alpha subunit type 1 subfamily. In terms of assembly, tetramer of two alpha and two beta subunits. Mg(2+) serves as cofactor.

It is found in the cytoplasm. The enzyme catalyses tRNA(Phe) + L-phenylalanine + ATP = L-phenylalanyl-tRNA(Phe) + AMP + diphosphate + H(+). In Staphylococcus haemolyticus (strain JCSC1435), this protein is Phenylalanine--tRNA ligase alpha subunit.